The following is a 238-amino-acid chain: Ribonuclease PH (238 aa).

Residues Arg-86 and 124 to 126 (GTR) contribute to the phosphate site.

It belongs to the RNase PH family. In terms of assembly, homohexameric ring arranged as a trimer of dimers.

It catalyses the reaction tRNA(n+1) + phosphate = tRNA(n) + a ribonucleoside 5'-diphosphate. Functionally, phosphorolytic 3'-5' exoribonuclease that plays an important role in tRNA 3'-end maturation. Removes nucleotide residues following the 3'-CCA terminus of tRNAs; can also add nucleotides to the ends of RNA molecules by using nucleoside diphosphates as substrates, but this may not be physiologically important. Probably plays a role in initiation of 16S rRNA degradation (leading to ribosome degradation) during starvation. The polypeptide is Ribonuclease PH (Pectobacterium atrosepticum (strain SCRI 1043 / ATCC BAA-672) (Erwinia carotovora subsp. atroseptica)).